The following is a 312-amino-acid chain: Ribonuclease Z (312 aa).

Positions 62, 64, 66, 67, 144, 215, and 273 each coordinate Zn(2+). Aspartate 66 serves as the catalytic Proton acceptor.

It belongs to the RNase Z family. Homodimer. It depends on Zn(2+) as a cofactor.

It catalyses the reaction Endonucleolytic cleavage of RNA, removing extra 3' nucleotides from tRNA precursor, generating 3' termini of tRNAs. A 3'-hydroxy group is left at the tRNA terminus and a 5'-phosphoryl group is left at the trailer molecule.. Functionally, zinc phosphodiesterase, which displays some tRNA 3'-processing endonuclease activity. Probably involved in tRNA maturation, by removing a 3'-trailer from precursor tRNA. This chain is Ribonuclease Z, found in Prochlorococcus marinus (strain MIT 9301).